The primary structure comprises 33 residues: Sucrose-6-phosphate hydrolase (33 aa).

Residue 15-18 participates in substrate binding; it reads PLQE. Glutamate 18 is an active-site residue.

This sequence belongs to the glycosyl hydrolase 32 family.

It carries out the reaction Hydrolysis of terminal non-reducing beta-D-fructofuranoside residues in beta-D-fructofuranosides.. Its pathway is glycan biosynthesis; sucrose metabolism. This chain is Sucrose-6-phosphate hydrolase, found in Fusobacterium mortiferum.